The sequence spans 1066 residues: Thyrotropin-releasing hormone-degrading ectoenzyme (1066 aa).

Residues Met-1–Lys-14 are compositionally biased toward basic and acidic residues. Residues Met-1–Gly-43 form a disordered region. Residues Met-1–Leu-81 lie on the Cytoplasmic side of the membrane. Positions Lys-15–Lys-25 are enriched in basic residues. The residue at position 71 (Thr-71) is a Phosphothreonine; by PKC. The chain crosses the membrane as a helical; Signal-anchor for type II membrane protein span at residues Val-82–Leu-102. Over Ser-103–His-1066 the chain is Extracellular. Residues Thr-118–Gln-176 are disordered. 5 N-linked (GlcNAc...) asparagine glycosylation sites follow: Asn-131, Asn-202, Asn-217, Asn-264, and Asn-380. Ala-446–Asn-450 contributes to the substrate binding site. Zn(2+) is bound at residue His-482. The active-site Proton acceptor is the Glu-483. Zn(2+) contacts are provided by His-486 and Glu-505. Residues Asn-647, Asn-676, Asn-691, Asn-705, Asn-726, Asn-842, and Asn-948 are each glycosylated (N-linked (GlcNAc...) asparagine).

The protein belongs to the peptidase M1 family. In terms of assembly, homodimer; disulfide-linked. The cofactor is Zn(2+).

The protein localises to the membrane. The enzyme catalyses Release of the N-terminal pyroglutamyl group from pGlu-|-His-Xaa tripeptides and pGlu-|-His-Xaa-Gly tetrapeptides.. Functionally, specific inactivation of TRH after its release. The chain is Thyrotropin-releasing hormone-degrading ectoenzyme (Trhde) from Mus musculus (Mouse).